Here is a 362-residue protein sequence, read N- to C-terminus: 3-isopropylmalate dehydrogenase (362 aa).

78 to 91 (GYKWDSLPPHQRPE) provides a ligand contact to NAD(+). Substrate contacts are provided by arginine 98, arginine 108, arginine 136, and aspartate 226. Mg(2+)-binding residues include aspartate 226, aspartate 250, and aspartate 254. An NAD(+)-binding site is contributed by 284-296 (GSAPDIAGLDKAN).

This sequence belongs to the isocitrate and isopropylmalate dehydrogenases family. LeuB type 1 subfamily. As to quaternary structure, homodimer. Mg(2+) serves as cofactor. It depends on Mn(2+) as a cofactor.

It is found in the cytoplasm. It catalyses the reaction (2R,3S)-3-isopropylmalate + NAD(+) = 4-methyl-2-oxopentanoate + CO2 + NADH. It participates in amino-acid biosynthesis; L-leucine biosynthesis; L-leucine from 3-methyl-2-oxobutanoate: step 3/4. Catalyzes the oxidation of 3-carboxy-2-hydroxy-4-methylpentanoate (3-isopropylmalate) to 3-carboxy-4-methyl-2-oxopentanoate. The product decarboxylates to 4-methyl-2 oxopentanoate. The polypeptide is 3-isopropylmalate dehydrogenase (Trichormus variabilis (strain ATCC 29413 / PCC 7937) (Anabaena variabilis)).